Here is a 141-residue protein sequence, read N- to C-terminus: Large ribosomal subunit protein uL11 (141 aa).

Belongs to the universal ribosomal protein uL11 family. Part of the ribosomal stalk of the 50S ribosomal subunit. Interacts with L10 and the large rRNA to form the base of the stalk. L10 forms an elongated spine to which L12 dimers bind in a sequential fashion forming a multimeric L10(L12)X complex. One or more lysine residues are methylated.

Its function is as follows. Forms part of the ribosomal stalk which helps the ribosome interact with GTP-bound translation factors. This is Large ribosomal subunit protein uL11 from Prochlorococcus marinus subsp. pastoris (strain CCMP1986 / NIES-2087 / MED4).